Reading from the N-terminus, the 144-residue chain is Histone H2A.Z-specific chaperone CHZ1 (144 aa).

A compositionally biased stretch (basic and acidic residues) spans 1 to 26 (MAEELKEKRELEVEEDNTKKDNSDKK). Disordered regions lie at residues 1 to 85 (MAEE…EQED) and 117 to 144 (AAEG…EFDE). Residues 125–144 (DEDEDEDDEDAKEDDGEFDE) show a composition bias toward acidic residues.

This sequence belongs to the CHZ1 family. As to quaternary structure, forms a heterotrimer with H2A.Z-H2B, stabilizing the association of the histone dimer. Also, with a lower affinity, forms a heterotrimer with H2A-H2B.

Its subcellular location is the nucleus. Functionally, forms a chaperone-bound H2A.Z-H2B complex that acts as a source for SWR1 complex-dependent H2A to H2A.Z histone replacement in chromatin. This is Histone H2A.Z-specific chaperone CHZ1 (CHZ1) from Vanderwaltozyma polyspora (strain ATCC 22028 / DSM 70294 / BCRC 21397 / CBS 2163 / NBRC 10782 / NRRL Y-8283 / UCD 57-17) (Kluyveromyces polysporus).